The chain runs to 417 residues: Serine hydroxymethyltransferase (417 aa).

(6S)-5,6,7,8-tetrahydrofolate is bound by residues L120 and 124–126; that span reads GHL. The residue at position 229 (K229) is an N6-(pyridoxal phosphate)lysine.

Belongs to the SHMT family. In terms of assembly, homodimer. It depends on pyridoxal 5'-phosphate as a cofactor.

Its subcellular location is the cytoplasm. It carries out the reaction (6R)-5,10-methylene-5,6,7,8-tetrahydrofolate + glycine + H2O = (6S)-5,6,7,8-tetrahydrofolate + L-serine. Its pathway is one-carbon metabolism; tetrahydrofolate interconversion. It participates in amino-acid biosynthesis; glycine biosynthesis; glycine from L-serine: step 1/1. Catalyzes the reversible interconversion of serine and glycine with tetrahydrofolate (THF) serving as the one-carbon carrier. This reaction serves as the major source of one-carbon groups required for the biosynthesis of purines, thymidylate, methionine, and other important biomolecules. Also exhibits THF-independent aldolase activity toward beta-hydroxyamino acids, producing glycine and aldehydes, via a retro-aldol mechanism. The chain is Serine hydroxymethyltransferase from Anaeromyxobacter sp. (strain K).